The primary structure comprises 302 residues: Glycine--tRNA ligase alpha subunit (302 aa).

This sequence belongs to the class-II aminoacyl-tRNA synthetase family. In terms of assembly, tetramer of two alpha and two beta subunits.

Its subcellular location is the cytoplasm. It catalyses the reaction tRNA(Gly) + glycine + ATP = glycyl-tRNA(Gly) + AMP + diphosphate. This chain is Glycine--tRNA ligase alpha subunit, found in Xanthomonas euvesicatoria pv. vesicatoria (strain 85-10) (Xanthomonas campestris pv. vesicatoria).